A 164-amino-acid polypeptide reads, in one-letter code: UPF0305 protein MTH_812 (164 aa).

This sequence belongs to the UPF0305 family.

In Methanothermobacter thermautotrophicus (strain ATCC 29096 / DSM 1053 / JCM 10044 / NBRC 100330 / Delta H) (Methanobacterium thermoautotrophicum), this protein is UPF0305 protein MTH_812.